A 607-amino-acid polypeptide reads, in one-letter code: Albumin (607 aa).

Positions 1-18 (MKWVTFISLLLLFSSAYS) are cleaved as a signal peptide. A propeptide spanning residues 19–24 (RGVFRR) is cleaved from the precursor. Albumin domains lie at 19-209 (RGVF…DAMR), 210-402 (EKVL…KLKH), and 403-600 (LVDE…KLVA). A Cu cation-binding site is contributed by His27. Ser29 bears the Phosphoserine mark. Ca(2+) contacts are provided by Glu30 and Asp37. Cys77 and Cys86 form a disulfide bridge. Residues Ser82 and Ser89 each carry the phosphoserine modification. His91 is a Zn(2+) binding site. 6 disulfides stabilise this stretch: Cys99-Cys115, Cys114-Cys125, Cys147-Cys192, Cys191-Cys200, Cys223-Cys269, and Cys268-Cys276. Position 107 is a phosphothreonine (Thr107). Position 228 is an N6-succinyllysine (Lys228). Glu267 contacts Ca(2+). Zn(2+) is bound by residues His270 and Asp272. 4 residues coordinate Ca(2+): Asp272, Glu275, Asp278, and Asp282. 8 cysteine pairs are disulfide-bonded: Cys288–Cys302, Cys301–Cys312, Cys339–Cys384, Cys383–Cys392, Cys415–Cys461, Cys460–Cys471, Cys484–Cys500, and Cys499–Cys510. Position 296 is a phosphoserine (Ser296). Ser442 bears the Phosphoserine mark. Residues Thr443 and Thr445 each carry the phosphothreonine modification. The residue at position 459 (Lys459) is an N6-succinyllysine. Phosphoserine is present on Ser512. Cystine bridges form between Cys537/Cys582 and Cys581/Cys590. N6-methyllysine is present on Lys557. Thr569 is subject to Phosphothreonine. At Lys587 the chain carries N6-succinyllysine.

This sequence belongs to the ALB/AFP/VDB family. In terms of assembly, interacts with FCGRT; this interaction regulates ALB homeostasis. Interacts with TASOR. In plasma, occurs in a covalently-linked complex with chromophore-bound alpha-1-microglobulin; this interaction does not prevent fatty acid binding to ALB. Post-translationally, phosphorylated by FAM20C in the extracellular medium. As to expression, plasma.

It localises to the secreted. Its function is as follows. Binds water, Ca(2+), Na(+), K(+), fatty acids, hormones, bilirubin and drugs. Its main function is the regulation of the colloidal osmotic pressure of blood. Major zinc transporter in plasma, typically binds about 80% of all plasma zinc. Major calcium and magnesium transporter in plasma, binds approximately 45% of circulating calcium and magnesium in plasma. Potentially has more than two calcium-binding sites and might additionally bind calcium in a non-specific manner. The shared binding site between zinc and calcium at residue Asp-272 suggests a crosstalk between zinc and calcium transport in the blood. The rank order of affinity is zinc &gt; calcium &gt; magnesium. Binds to the bacterial siderophore enterobactin and inhibits enterobactin-mediated iron uptake of E.coli from ferric transferrin, and may thereby limit the utilization of iron and growth of enteric bacteria such as E.coli. Does not prevent iron uptake by the bacterial siderophore aerobactin. The sequence is that of Albumin (ALB) from Ovis aries (Sheep).